The sequence spans 248 residues: Pyridoxine 5'-phosphate synthase (248 aa).

Residue Asn11 participates in 3-amino-2-oxopropyl phosphate binding. 13–14 (DH) serves as a coordination point for 1-deoxy-D-xylulose 5-phosphate. 3-amino-2-oxopropyl phosphate is bound at residue Arg22. The active-site Proton acceptor is His47. The 1-deoxy-D-xylulose 5-phosphate site is built by Arg49 and His54. The Proton acceptor role is filled by Glu74. Residue Thr104 coordinates 1-deoxy-D-xylulose 5-phosphate. Residue His198 is the Proton donor of the active site. 3-amino-2-oxopropyl phosphate is bound by residues Gly199 and 220–221 (GH).

It belongs to the PNP synthase family. Homooctamer; tetramer of dimers.

The protein localises to the cytoplasm. The enzyme catalyses 3-amino-2-oxopropyl phosphate + 1-deoxy-D-xylulose 5-phosphate = pyridoxine 5'-phosphate + phosphate + 2 H2O + H(+). Its pathway is cofactor biosynthesis; pyridoxine 5'-phosphate biosynthesis; pyridoxine 5'-phosphate from D-erythrose 4-phosphate: step 5/5. In terms of biological role, catalyzes the complicated ring closure reaction between the two acyclic compounds 1-deoxy-D-xylulose-5-phosphate (DXP) and 3-amino-2-oxopropyl phosphate (1-amino-acetone-3-phosphate or AAP) to form pyridoxine 5'-phosphate (PNP) and inorganic phosphate. This Ruegeria pomeroyi (strain ATCC 700808 / DSM 15171 / DSS-3) (Silicibacter pomeroyi) protein is Pyridoxine 5'-phosphate synthase.